A 231-amino-acid chain; its full sequence is ATP-dependent dethiobiotin synthetase BioD (231 aa).

12 to 17 provides a ligand contact to ATP; it reads EVGKTV. Thr-16 contributes to the Mg(2+) binding site. Lys-37 is a catalytic residue. Ser-41 is a substrate binding site. ATP contacts are provided by residues Asp-51, 112 to 115, and 202 to 204; these read EGAG and PKL. Mg(2+) is bound by residues Asp-51 and Glu-112.

This sequence belongs to the dethiobiotin synthetase family. Homodimer. Mg(2+) is required as a cofactor.

Its subcellular location is the cytoplasm. The catalysed reaction is (7R,8S)-7,8-diammoniononanoate + CO2 + ATP = (4R,5S)-dethiobiotin + ADP + phosphate + 3 H(+). The protein operates within cofactor biosynthesis; biotin biosynthesis; biotin from 7,8-diaminononanoate: step 1/2. In terms of biological role, catalyzes a mechanistically unusual reaction, the ATP-dependent insertion of CO2 between the N7 and N8 nitrogen atoms of 7,8-diaminopelargonic acid (DAPA, also called 7,8-diammoniononanoate) to form a ureido ring. In Bacillus subtilis (strain 168), this protein is ATP-dependent dethiobiotin synthetase BioD.